Reading from the N-terminus, the 427-residue chain is Succinate--CoA ligase [ADP-forming] subunit beta, mitochondrial (427 aa).

The N-terminal 30 residues, 1–30 (MYSRKSLSLISKCGQLSRLNAQAALQARRH), are a transit peptide targeting the mitochondrion. The 246-residue stretch at 39-284 (AQLLREYGIG…LSQEDPDEVK (246 aa)) folds into the ATP-grasp domain. Residues Lys76 and 83–85 (GRG) each bind ATP. Ser102 is modified (phosphoserine). ATP is bound at residue Glu144. The Mg(2+) site is built by Asn236 and Asp253. A phosphoserine mark is found at Ser263 and Ser276. Residues Asn304 and 361–363 (GIV) each bind substrate.

Belongs to the succinate/malate CoA ligase beta subunit family. In terms of assembly, heterodimer of an alpha and a beta subunit. Requires Mg(2+) as cofactor.

The protein resides in the mitochondrion. The enzyme catalyses succinate + ATP + CoA = succinyl-CoA + ADP + phosphate. It participates in carbohydrate metabolism; tricarboxylic acid cycle; succinate from succinyl-CoA (ligase route): step 1/1. Functionally, succinyl-CoA synthetase functions in the citric acid cycle (TCA), coupling the hydrolysis of succinyl-CoA to the synthesis of ATP and thus represents the only step of substrate-level phosphorylation in the TCA. The beta subunit provides nucleotide specificity of the enzyme and binds the substrate succinate, while the binding sites for coenzyme A and phosphate are found in the alpha subunit. In Saccharomyces cerevisiae (strain ATCC 204508 / S288c) (Baker's yeast), this protein is Succinate--CoA ligase [ADP-forming] subunit beta, mitochondrial.